The following is an 84-amino-acid chain: UPF0297 protein Csac_1773 (84 aa).

Belongs to the UPF0297 family.

The sequence is that of UPF0297 protein Csac_1773 from Caldicellulosiruptor saccharolyticus (strain ATCC 43494 / DSM 8903 / Tp8T 6331).